A 486-amino-acid chain; its full sequence is uncharacterized protein (486 aa).

It belongs to the UbiD family.

This is an uncharacterized protein from Aquifex aeolicus (strain VF5).